The chain runs to 127 residues: Small ribosomal subunit protein uS11 (127 aa).

The protein belongs to the universal ribosomal protein uS11 family. As to quaternary structure, part of the 30S ribosomal subunit. Interacts with proteins S7 and S18. Binds to IF-3.

In terms of biological role, located on the platform of the 30S subunit, it bridges several disparate RNA helices of the 16S rRNA. Forms part of the Shine-Dalgarno cleft in the 70S ribosome. In Chlorobaculum parvum (strain DSM 263 / NCIMB 8327) (Chlorobium vibrioforme subsp. thiosulfatophilum), this protein is Small ribosomal subunit protein uS11.